A 143-amino-acid chain; its full sequence is uncharacterized protein (143 aa).

Residues Ile-24–Phe-78 form the HTH cro/C1-type domain. Residues Gln-35–Lys-54 constitute a DNA-binding region (H-T-H motif).

This is an uncharacterized protein from Sinorhizobium fredii (strain NBRC 101917 / NGR234).